The following is a 323-amino-acid chain: Oligodendrocyte transcription factor 2 (323 aa).

Residues 1–13 (MDSDASLVSSRPS) show a composition bias toward polar residues. The segment at 1–107 (MDSDASLVSS…KKQMTEPELQ (107 aa)) is disordered. The segment covering 77-93 (SSSSSTSSSTSSAATSS) has biased composition (low complexity). A bHLH domain is found at 108–162 (QLRLKINSRERKRMHDLNIAMDGLREVMPYAHGPSVRKLSKIATLLLARNYILML).

As to quaternary structure, interacts with NKX2-2. Interacts with ZNF488. Expressed specifically in the brain.

Its subcellular location is the nucleus. It is found in the cytoplasm. In terms of biological role, required for oligodendrocyte and motor neuron specification in the spinal cord, as well as for the development of somatic motor neurons in the hindbrain. Functions together with ZNF488 to promote oligodendrocyte differentiation. Cooperates with OLIG1 to establish the pMN domain of the embryonic neural tube. Antagonist of V2 interneuron and of NKX2-2-induced V3 interneuron development. This Mus musculus (Mouse) protein is Oligodendrocyte transcription factor 2 (Olig2).